Consider the following 307-residue polypeptide: uncharacterized protein (307 aa).

A helical membrane pass occupies residues 12 to 34 (LLAFLLALIMIGSVFAYMLSGGS).

The protein resides in the membrane. This is an uncharacterized protein from Archaeoglobus fulgidus (strain ATCC 49558 / DSM 4304 / JCM 9628 / NBRC 100126 / VC-16).